Consider the following 446-residue polypeptide: Dimethylsulfoniopropionate lyase DddP (446 aa).

Basic and acidic residues predominate over residues 1-13 (MNQHYSETRKIDP). The segment at 1 to 30 (MNQHYSETRKIDPSRGATLGDNTPNDNNRI) is disordered. 6 residues coordinate a divalent metal cation: D295, D297, D307, H371, E406, and E421.

The protein belongs to the peptidase M24B family. Homodimer. A divalent metal cation serves as cofactor.

It catalyses the reaction S,S-dimethyl-beta-propiothetin = acrylate + dimethyl sulfide + H(+). Able to cleave dimethylsulfoniopropionate (DMSP), releasing dimethyl sulfide (DMS). DMS is the principal form by which sulfur is transported from oceans to the atmosphere. The real activity of the protein is however subject to debate and it is unclear whether it constitutes a real dimethylsulfoniopropionate lyase in vivo: the low activity with DMSP as substrate suggests that DMSP is not its native substrate. The protein is Dimethylsulfoniopropionate lyase DddP of Roseovarius nubinhibens (strain ATCC BAA-591 / DSM 15170 / ISM).